A 187-amino-acid chain; its full sequence is Orotate phosphoribosyltransferase (187 aa).

5-phospho-alpha-D-ribose 1-diphosphate is bound by residues arginine 98, lysine 99, lysine 102, histidine 104, and 128 to 136 (EDVTTTGGS). Threonine 132 and arginine 160 together coordinate orotate.

Belongs to the purine/pyrimidine phosphoribosyltransferase family. PyrE subfamily. In terms of assembly, homodimer. It depends on Mg(2+) as a cofactor.

It carries out the reaction orotidine 5'-phosphate + diphosphate = orotate + 5-phospho-alpha-D-ribose 1-diphosphate. It participates in pyrimidine metabolism; UMP biosynthesis via de novo pathway; UMP from orotate: step 1/2. Functionally, catalyzes the transfer of a ribosyl phosphate group from 5-phosphoribose 1-diphosphate to orotate, leading to the formation of orotidine monophosphate (OMP). This chain is Orotate phosphoribosyltransferase, found in Rhodopseudomonas palustris (strain BisB18).